We begin with the raw amino-acid sequence, 1251 residues long: Botulinum neurotoxin type E (1251 aa).

His-212 serves as a coordination point for Zn(2+). Glu-213 is a catalytic residue. Residues His-216 and Glu-251 each contribute to the Zn(2+) site. Cys-412 and Cys-426 are joined by a disulfide. Residues 423–819 (KSICIEINNG…ELNSMVIDTL (397 aa)) form a translocation domain (TD) region. The belt stretch occupies residues 466-515 (NDLDQVILNFNSESAPGLSDEKLNLTIQNDAYIPKYDSNGTSDIEQHDVN). The interval 845-1067 (KRIKSSSVLN…EIQTLYNNEP (223 aa)) is N-terminus of receptor binding domain (N-RBD). The segment at 1068 to 1251 (NANILKDFWG…ISEEHGWQEK (184 aa)) is C-terminus of receptor binding domain (C-RBD). A Host ganglioside-binding motif motif is present at residues 1221–1224 (STWY).

The protein belongs to the peptidase M27 family. In terms of assembly, heterodimer; disulfide-linked heterodimer of a light chain (LC) and a heavy chain (HC). The LC has the proteolytic/pharmacological activity, while the N- and C-terminal of the HC mediate channel formation and toxin binding, respectively. Interacts with host synaptic vesicle glycoproteins SV2A and SV2B which probably serve as coreceptors. Zn(2+) serves as cofactor.

The protein resides in the secreted. Its subcellular location is the host cytoplasm. It localises to the host cytosol. The protein localises to the host synapse. It is found in the host presynaptic cell membrane. The protein resides in the host cytoplasmic vesicle. Its subcellular location is the host secretory vesicle. It localises to the host synaptic vesicle membrane. The enzyme catalyses Limited hydrolysis of proteins of the neuroexocytosis apparatus, synaptobrevins, SNAP25 or syntaxin. No detected action on small molecule substrates.. Botulinum toxin causes flaccid paralysis by inhibiting neurotransmitter (acetylcholine) release from the presynaptic membranes of nerve terminals of eukaryotic host skeletal and autonomic nervous system, with frequent heart or respiratory failure. Precursor of botulinum neurotoxin E which has 2 coreceptors; complex polysialylated gangliosides found on neural tissue and specific membrane-anchored proteins found in synaptic vesicles. Receptor proteins are exposed on host presynaptic cell membrane during neurotransmitter release, when the toxin heavy chain (HC) binds to them. Upon synaptic vesicle recycling the toxin is taken up via the endocytic pathway. When the pH of the toxin-containing endosome drops a structural rearrangement occurs so that the N-terminus of the HC forms pores that allows the light chain (LC) to translocate into the cytosol. Once in the cytosol the disulfide bond linking the 2 subunits is reduced and LC cleaves its target protein on synaptic vesicles, preventing their fusion with the cytoplasmic membrane and thus neurotransmitter release. Its function is as follows. Has proteolytic activity. After translocation into the eukaryotic host cytosol, LC hydrolyzes the '180-Arg-|-Ile-181' bond in SNAP25, blocking neurotransmitter release. In terms of biological role, responsible for host epithelial cell transcytosis, host nerve cell targeting and translocation of light chain (LC) into host cytosol. Composed of 3 subdomains; the translocation domain (TD), and N-terminus and C-terminus of the receptor-binding domain (RBD). The RBD is responsible for the adherence of the toxin to the cell surface. It simultaneously recognizes 2 coreceptors; host polysialated gangliosides and the receptor proteins SV2A and SV2B in close proximity on host synaptic vesicles. Interaction with SV2 proteins requires SV2 glycosylation. The N-terminus of the TD wraps an extended belt around the perimeter of the LC, protecting Zn(2+) in the active site; it may also prevent premature LC dissociation from the translocation channel and protect toxin prior to translocation. The TD inserts into synaptic vesicle membrane to allow translocation into the host cytosol. Binds ganglioside GD1a in vitro. The chain is Botulinum neurotoxin type E from Clostridium butyricum.